Reading from the N-terminus, the 67-residue chain is Large ribosomal subunit protein bL32 (67 aa).

The span at 1–19 (MAVPKRKMSRANTRARRSQ) shows a compositional bias: basic residues. Residues 1-21 (MAVPKRKMSRANTRARRSQWK) form a disordered region.

The protein belongs to the bacterial ribosomal protein bL32 family.

The sequence is that of Large ribosomal subunit protein bL32 from Micrococcus luteus (strain ATCC 4698 / DSM 20030 / JCM 1464 / CCM 169 / CCUG 5858 / IAM 1056 / NBRC 3333 / NCIMB 9278 / NCTC 2665 / VKM Ac-2230) (Micrococcus lysodeikticus).